The chain runs to 103 residues: Host transcription reprogramming factor 6 (103 aa).

The signal sequence occupies residues 1-19; it reads MRATTAFQVIAFLAVGAAA. The segment at 66-92 adopts a C2H2-type zinc-finger fold; sequence YWCPNQVCAKTFATQEERDHHIANTVH. Residues 82 to 103 are disordered; that stretch reads ERDHHIANTVHPTNSKRDVLLQ.

It localises to the secreted. It is found in the host nucleus. In terms of biological role, probable secreted effector that translocates into the nuclei of host cells to reprogram the expression of targeted genes by binding on effector binding elements in rice. This Pyricularia oryzae (strain 70-15 / ATCC MYA-4617 / FGSC 8958) (Rice blast fungus) protein is Host transcription reprogramming factor 6.